The primary structure comprises 637 residues: Biosynthetic arginine decarboxylase (637 aa).

Residue lysine 107 is modified to N6-(pyridoxal phosphate)lysine. Residue 289 to 299 coordinates substrate; sequence LDVGGGLGVDY.

It belongs to the Orn/Lys/Arg decarboxylase class-II family. SpeA subfamily. The cofactor is Mg(2+). Requires pyridoxal 5'-phosphate as cofactor.

The enzyme catalyses L-arginine + H(+) = agmatine + CO2. Catalyzes the biosynthesis of agmatine from arginine. In Thermosynechococcus vestitus (strain NIES-2133 / IAM M-273 / BP-1), this protein is Biosynthetic arginine decarboxylase.